Here is a 127-residue protein sequence, read N- to C-terminus: Aspartate 1-decarboxylase (127 aa).

Ser25 functions as the Schiff-base intermediate with substrate; via pyruvic acid in the catalytic mechanism. Ser25 is modified (pyruvic acid (Ser)). Thr57 serves as a coordination point for substrate. The Proton donor role is filled by Tyr58. Gly73 to Ala75 serves as a coordination point for substrate.

This sequence belongs to the PanD family. In terms of assembly, heterooctamer of four alpha and four beta subunits. The cofactor is pyruvate. Is synthesized initially as an inactive proenzyme, which is activated by self-cleavage at a specific serine bond to produce a beta-subunit with a hydroxyl group at its C-terminus and an alpha-subunit with a pyruvoyl group at its N-terminus.

The protein resides in the cytoplasm. The enzyme catalyses L-aspartate + H(+) = beta-alanine + CO2. It functions in the pathway cofactor biosynthesis; (R)-pantothenate biosynthesis; beta-alanine from L-aspartate: step 1/1. Catalyzes the pyruvoyl-dependent decarboxylation of aspartate to produce beta-alanine. The polypeptide is Aspartate 1-decarboxylase (Staphylococcus aureus (strain JH1)).